The sequence spans 89 residues: Large ribosomal subunit protein bL27 (89 aa).

Belongs to the bacterial ribosomal protein bL27 family.

The chain is Large ribosomal subunit protein bL27 from Cereibacter sphaeroides (strain ATCC 17029 / ATH 2.4.9) (Rhodobacter sphaeroides).